Reading from the N-terminus, the 261-residue chain is CD40 ligand (261 aa).

Residues 1–22 lie on the Cytoplasmic side of the membrane; it reads MIETYNQTSPRSAATGLPISMK. Residues 23-46 form a helical; Signal-anchor for type II membrane protein membrane-spanning segment; it reads IFMYLLTVFLITQMIGSALFAVYL. The Extracellular segment spans residues 47–261; that stretch reads HRRLDKIEDE…GFTSFGLLKL (215 aa). The region spanning 122–261 is the THD domain; sequence IAAHVISEAS…GFTSFGLLKL (140 aa). A disulfide bridge connects residues Cys-178 and Cys-218. Asn-240 carries an N-linked (GlcNAc...) (complex) asparagine; alternate glycan. N-linked (GlcNAc...) (high mannose) asparagine; alternate glycosylation is present at Asn-240.

This sequence belongs to the tumor necrosis factor family. Homotrimer. Interacts with isoform 3 of CD28. CD40 ligand, soluble form: Exists as either a monomer or a homotrimer. Forms a ternary complex between CD40 and integrins for CD40-CD40LG signaling. In terms of processing, the soluble form derives from the membrane form by proteolytic processing. Post-translationally, N-linked glycan is a mixture of high mannose and complex type. Glycan structure does not influence binding affinity to CD40. Not O-glycosylated. Specifically expressed on activated CD4+ T-lymphocytes.

Its subcellular location is the cell membrane. It is found in the cell surface. The protein resides in the secreted. In terms of biological role, cytokine that acts as a ligand to CD40/TNFRSF5. Costimulates T-cell proliferation and cytokine production. Its cross-linking on T-cells generates a costimulatory signal which enhances the production of IL4 and IL10 in conjunction with the TCR/CD3 ligation and CD28 costimulation. Induces the activation of NF-kappa-B. Induces the activation of kinases MAPK8 and PAK2 in T-cells. Induces tyrosine phosphorylation of isoform 3 of CD28. Mediates B-cell proliferation in the absence of co-stimulus as well as IgE production in the presence of IL4. Involved in immunoglobulin class switching. Acts as a ligand for integrins, specifically ITGA5:ITGB1 and ITGAV:ITGB3; both integrins and the CD40 receptor are required for activation of CD40-CD40LG signaling, which have cell-type dependent effects, such as B-cell activation, NF-kappa-B signaling and anti-apoptotic signaling. This chain is CD40 ligand (CD40LG), found in Homo sapiens (Human).